The primary structure comprises 444 residues: Methylenetetrahydrofolate--tRNA-(uracil-5-)-methyltransferase TrmFO (444 aa).

Position 9-14 (9-14 (GAGMAG)) interacts with FAD.

It belongs to the MnmG family. TrmFO subfamily. FAD serves as cofactor.

The protein localises to the cytoplasm. It catalyses the reaction uridine(54) in tRNA + (6R)-5,10-methylene-5,6,7,8-tetrahydrofolate + NADH + H(+) = 5-methyluridine(54) in tRNA + (6S)-5,6,7,8-tetrahydrofolate + NAD(+). The catalysed reaction is uridine(54) in tRNA + (6R)-5,10-methylene-5,6,7,8-tetrahydrofolate + NADPH + H(+) = 5-methyluridine(54) in tRNA + (6S)-5,6,7,8-tetrahydrofolate + NADP(+). Functionally, catalyzes the folate-dependent formation of 5-methyl-uridine at position 54 (M-5-U54) in all tRNAs. This chain is Methylenetetrahydrofolate--tRNA-(uracil-5-)-methyltransferase TrmFO, found in Cereibacter sphaeroides (strain KD131 / KCTC 12085) (Rhodobacter sphaeroides).